We begin with the raw amino-acid sequence, 357 residues long: MTDRKNGLTYADAGVDIDAGNRLVDLIKPMVRATARPGADAEIGGFGGLFDLKAAGFKDPVLVAATDGVGTKVKIAIEAGLHAGIGIDLVAMSVNDLVVQGAEPLFFLDYFACGKLDPVATAAIVAGIAEGCRDSGCALIGGETAEMPGLYTDGDYDLAGFAVGAAERGTLLPGKDIAAGDAVIGLASSGVHSNGFSLVRKIVERSGLGYDANAPFSPVMTLGGALLAPTKLYVKSCLRAIRETGAVKGLAHITGGGFTDNIPRVLPPHLGVGIDLPRLPVLPVFKWLAEQGEIAELELLRTFNCGIGMIAIVRADAVEQVSDILTEAGETVCLLGEVIEAKGEHRVVYSGHLDLAW.

It belongs to the AIR synthase family.

The protein resides in the cytoplasm. The enzyme catalyses 2-formamido-N(1)-(5-O-phospho-beta-D-ribosyl)acetamidine + ATP = 5-amino-1-(5-phospho-beta-D-ribosyl)imidazole + ADP + phosphate + H(+). It functions in the pathway purine metabolism; IMP biosynthesis via de novo pathway; 5-amino-1-(5-phospho-D-ribosyl)imidazole from N(2)-formyl-N(1)-(5-phospho-D-ribosyl)glycinamide: step 2/2. The chain is Phosphoribosylformylglycinamidine cyclo-ligase from Rhodopseudomonas palustris (strain BisB18).